Here is a 431-residue protein sequence, read N- to C-terminus: Enolase (431 aa).

Residue glutamine 167 participates in (2R)-2-phosphoglycerate binding. Glutamate 209 (proton donor) is an active-site residue. 3 residues coordinate Mg(2+): aspartate 246, glutamate 289, and aspartate 316. (2R)-2-phosphoglycerate-binding residues include lysine 341, arginine 370, serine 371, and lysine 392. Lysine 341 acts as the Proton acceptor in catalysis.

The protein belongs to the enolase family. Component of the RNA degradosome, a multiprotein complex involved in RNA processing and mRNA degradation. The cofactor is Mg(2+).

Its subcellular location is the cytoplasm. It localises to the secreted. The protein resides in the cell surface. The enzyme catalyses (2R)-2-phosphoglycerate = phosphoenolpyruvate + H2O. It functions in the pathway carbohydrate degradation; glycolysis; pyruvate from D-glyceraldehyde 3-phosphate: step 4/5. In terms of biological role, catalyzes the reversible conversion of 2-phosphoglycerate (2-PG) into phosphoenolpyruvate (PEP). It is essential for the degradation of carbohydrates via glycolysis. The chain is Enolase from Marinobacter nauticus (strain ATCC 700491 / DSM 11845 / VT8) (Marinobacter aquaeolei).